We begin with the raw amino-acid sequence, 204 residues long: Glutathione S-transferase (204 aa).

Residues 3 to 80 (PSYKLTYCPV…YLGKQFGLSG (78 aa)) form the GST N-terminal domain. Glutathione-binding positions include Tyr9, Trp40, Lys44, 50-52 (GKT), and 64-65 (QS). Positions 82-204 (DDWENLEIDM…WVAKRPPTDL (123 aa)) constitute a GST C-terminal domain.

This sequence belongs to the GST superfamily. Sigma family.

The catalysed reaction is RX + glutathione = an S-substituted glutathione + a halide anion + H(+). The protein is Glutathione S-transferase of Blattella germanica (German cockroach).